The primary structure comprises 463 residues: 23S rRNA (uracil(1939)-C(5))-methyltransferase RlmD (463 aa).

The region spanning 14 to 78 is the TRAM domain; that stretch reads AVAPGSDPVV…PSYEQAHLLE (65 aa). The [4Fe-4S] cluster site is built by Cys91, Cys97, Cys100, and Cys179. Residues Gln287, Phe316, Asn321, Glu337, Asn365, and Asp386 each contribute to the S-adenosyl-L-methionine site. The active-site Nucleophile is Cys419.

This sequence belongs to the class I-like SAM-binding methyltransferase superfamily. RNA M5U methyltransferase family. RlmD subfamily.

The enzyme catalyses uridine(1939) in 23S rRNA + S-adenosyl-L-methionine = 5-methyluridine(1939) in 23S rRNA + S-adenosyl-L-homocysteine + H(+). Its function is as follows. Catalyzes the formation of 5-methyl-uridine at position 1939 (m5U1939) in 23S rRNA. The sequence is that of 23S rRNA (uracil(1939)-C(5))-methyltransferase RlmD from Cupriavidus pinatubonensis (strain JMP 134 / LMG 1197) (Cupriavidus necator (strain JMP 134)).